A 356-amino-acid polypeptide reads, in one-letter code: Alpha-N-acetylneuraminide alpha-2,8-sialyltransferase (356 aa).

At Met-1 to Pro-29 the chain is on the cytoplasmic side. A helical; Signal-anchor for type II membrane protein transmembrane segment spans residues Met-30–Val-48. Over Tyr-49–Ser-356 the chain is Lumenal. 2 N-linked (GlcNAc...) asparagine glycosylation sites follow: Asn-71 and Asn-119. 2 disulfide bridges follow: Cys-138/Cys-287 and Cys-152/Cys-347. CMP-N-acetyl-beta-neuraminate is bound by residues Asn-143 and Asn-166. 2 N-linked (GlcNAc...) asparagine glycosylation sites follow: Asn-214 and Asn-245. CMP-N-acetyl-beta-neuraminate-binding residues include Ser-274, Thr-275, Gly-276, Trp-296, and His-310. The Proton donor/acceptor role is filled by His-322.

This sequence belongs to the glycosyltransferase 29 family.

It is found in the golgi apparatus membrane. The catalysed reaction is an N-acetyl-alpha-neuraminyl-(2-&gt;3)-beta-D-galactosyl derivative + CMP-N-acetyl-beta-neuraminate = an N-acetyl-alpha-neuraminyl-(2-&gt;8)-N-acetyl-alpha-neuraminyl-(2-&gt;3)-beta-D-galactosyl derivative + CMP + H(+). It carries out the reaction a ganglioside GM3 (d18:1(4E)) + CMP-N-acetyl-beta-neuraminate = a ganglioside GD3 (d18:1(4E)) + CMP + H(+). The enzyme catalyses a ganglioside GD3 (d18:1(4E)) + CMP-N-acetyl-beta-neuraminate = a ganglioside GT3 (d18:1(4E)) + CMP + H(+). It catalyses the reaction a ganglioside GD1a (d18:1(4E)) + CMP-N-acetyl-beta-neuraminate = a ganglioside GT1a (d18:1(4E)) + CMP + H(+). The catalysed reaction is a ganglioside GT1b (d18:1(4E)) + CMP-N-acetyl-beta-neuraminate = a ganglioside GQ1b (d18:1(4E)) + CMP + H(+). It carries out the reaction a ganglioside GM1b (d18:1(4E)) + CMP-N-acetyl-beta-neuraminate = a ganglioside GD1c (d18:1(4E)) + CMP + H(+). The enzyme catalyses a ganglioside GD3 + CMP-N-acetyl-beta-neuraminate = a ganglioside GT3 + CMP + H(+). It catalyses the reaction [alpha-N-acetylneuraminyl-(2-&gt;8)](n)-alpha-N-acetylneuraminyl-(2-&gt;8)-alpha-N-acetylneuraminyl-(2-&gt;3)-beta-D-galactosyl-(1-&gt;4)-beta-D-glucosyl-(1&lt;-&gt;1)-ceramide + CMP-N-acetyl-beta-neuraminate = [alpha-N-acetylneuraminyl-(2-&gt;8)](n+1)-alpha-N-acetylneuraminyl-(2-&gt;8)-alpha-N-acetylneuraminyl-(2-&gt;3)-beta-D-galactosyl-(1-&gt;4)-beta-D-glucosyl-(1&lt;-&gt;1)-ceramide + CMP + H(+). The protein operates within protein modification; protein glycosylation. Its pathway is lipid metabolism; sphingolipid metabolism. In terms of biological role, catalyzes the addition of sialic acid in alpha 2,8-linkage to the sialic acid moiety of the ganglioside GM3 to form ganglioside GD3; gangliosides are a subfamily of complex glycosphingolipds that contain one or more residues of sialic acid. Can catalyze the addition of a second alpha-2,8- sialic acid to GD3 to form GT3. Can use GM1b, GD1a and GT1b as acceptor substrates to synthesize GD1c, GT1a and GQ1b respectively. The protein is Alpha-N-acetylneuraminide alpha-2,8-sialyltransferase of Pan troglodytes (Chimpanzee).